A 1456-amino-acid polypeptide reads, in one-letter code: ABC-type transporter eriD (1456 aa).

The interval 1 to 65 is disordered; sequence MAENEKVTYG…DPRMDPLSGK (65 aa). Residues 30–40 show a composition bias toward polar residues; it reads SMTNASRSSVY. Residues 118-372 form the ABC transporter 1 domain; the sequence is LDIPGLARDI…FIDMGFECPP (255 aa). The next 6 helical transmembrane spans lie at 481-501, 515-535, 561-581, 590-610, 623-643, and 734-754; these read NFLT…SIFY, ALLF…ILQI, VLCD…VLYF, GAFF…SMIF, AMAP…FTIP, and ILFG…EFIA. The segment at 775–799 is disordered; the sequence is EGASEDEEAGTGSTGTRTQEEPVDK. Residues 813-1056 form the ABC transporter 2 domain; it reads FHWEDVIYDI…IIDYFEGQGA (244 aa). 849–856 provides a ligand contact to ATP; it reads GASGAGKT. 7 consecutive transmembrane segments (helical) span residues 1148–1168, 1184–1204, 1233–1253, 1269–1289, 1301–1321, 1337–1357, and 1423–1443; these read YIYS…FSFF, VFMG…HFVT, LPWN…PVGM, LMFL…HMLI, IASL…GPSG, PFTY…PAFC, and FGFL…FYWL.

This sequence belongs to the ABC transporter superfamily. ABCG family. PDR (TC 3.A.1.205) subfamily.

The protein resides in the membrane. ABC-type transporter; part of the gene cluster that mediates the biosynthesis of erinacines, cyathane-xylosides that show unique biological activities, including leishmanicidal activity, stimulating activity for nerve growth-factor synthesis, and agonistic activity toward the kappa opioid receptor. This is ABC-type transporter eriD from Hericium erinaceus (Lion's mane mushroom).